Here is a 180-residue protein sequence, read N- to C-terminus: Putative methyltransferase YrhH (180 aa).

This sequence belongs to the methyltransferase superfamily.

The sequence is that of Putative methyltransferase YrhH (yrhH) from Bacillus subtilis (strain 168).